A 61-amino-acid chain; its full sequence is Small ribosomal subunit protein uS14B (61 aa).

Residues Cys24, Cys27, Cys40, and Cys43 each contribute to the Zn(2+) site.

The protein belongs to the universal ribosomal protein uS14 family. Zinc-binding uS14 subfamily. Part of the 30S ribosomal subunit. Contacts proteins S3 and S10. The cofactor is Zn(2+).

Its function is as follows. Binds 16S rRNA, required for the assembly of 30S particles and may also be responsible for determining the conformation of the 16S rRNA at the A site. The chain is Small ribosomal subunit protein uS14B from Lactiplantibacillus plantarum (strain ATCC BAA-793 / NCIMB 8826 / WCFS1) (Lactobacillus plantarum).